The primary structure comprises 376 residues: Queuine tRNA-ribosyltransferase (376 aa).

Catalysis depends on aspartate 89, which acts as the Proton acceptor. Substrate contacts are provided by residues 89–93, aspartate 143, glutamine 194, and glycine 221; that span reads DSGGF. The tract at residues 252–258 is RNA binding; that stretch reads GVGTPSN. Catalysis depends on aspartate 271, which acts as the Nucleophile. Residues 276–280 form an RNA binding; important for wobble base 34 recognition region; it reads ARNGR. Zn(2+) contacts are provided by cysteine 309, cysteine 311, cysteine 314, and histidine 340.

The protein belongs to the queuine tRNA-ribosyltransferase family. In terms of assembly, homodimer. Within each dimer, one monomer is responsible for RNA recognition and catalysis, while the other monomer binds to the replacement base PreQ1. It depends on Zn(2+) as a cofactor.

The catalysed reaction is 7-aminomethyl-7-carbaguanine + guanosine(34) in tRNA = 7-aminomethyl-7-carbaguanosine(34) in tRNA + guanine. It functions in the pathway tRNA modification; tRNA-queuosine biosynthesis. Functionally, catalyzes the base-exchange of a guanine (G) residue with the queuine precursor 7-aminomethyl-7-deazaguanine (PreQ1) at position 34 (anticodon wobble position) in tRNAs with GU(N) anticodons (tRNA-Asp, -Asn, -His and -Tyr). Catalysis occurs through a double-displacement mechanism. The nucleophile active site attacks the C1' of nucleotide 34 to detach the guanine base from the RNA, forming a covalent enzyme-RNA intermediate. The proton acceptor active site deprotonates the incoming PreQ1, allowing a nucleophilic attack on the C1' of the ribose to form the product. After dissociation, two additional enzymatic reactions on the tRNA convert PreQ1 to queuine (Q), resulting in the hypermodified nucleoside queuosine (7-(((4,5-cis-dihydroxy-2-cyclopenten-1-yl)amino)methyl)-7-deazaguanosine). The polypeptide is Queuine tRNA-ribosyltransferase (Clostridium acetobutylicum (strain ATCC 824 / DSM 792 / JCM 1419 / IAM 19013 / LMG 5710 / NBRC 13948 / NRRL B-527 / VKM B-1787 / 2291 / W)).